The sequence spans 420 residues: Replication factor C large subunit (420 aa).

46–53 (GVQGSGKT) is a binding site for ATP.

Belongs to the activator 1 small subunits family. RfcL subfamily. In terms of assembly, heteromultimer composed of small subunits (RfcS) and large subunits (RfcL).

Its function is as follows. Part of the RFC clamp loader complex which loads the PCNA sliding clamp onto DNA. The sequence is that of Replication factor C large subunit from Thermoplasma volcanium (strain ATCC 51530 / DSM 4299 / JCM 9571 / NBRC 15438 / GSS1).